A 1131-amino-acid chain; its full sequence is Translation initiation factor IF-2 (1131 aa).

Residues 49–542 (KFKGSVSSNE…AFIMPKPQQS (494 aa)) are disordered. Basic and acidic residues predominate over residues 60–75 (KSIDNGKASRVEKPEK). Composition is skewed to polar residues over residues 76–88 (NNSV…QTPS) and 108–125 (SEQN…NIQS). The segment covering 127–138 (GDRKYQHTDRRP) has biased composition (basic and acidic residues). Over residues 139–152 (QGNNGEGPQTSTNS) the composition is skewed to polar residues. Composition is skewed to basic and acidic residues over residues 164–180 (GDRR…RPYN) and 223–239 (GDRR…RPYN). Residues 411 to 436 (GQGGYGGRPQGQGSYGGRPQGQGGYA) show a composition bias toward gly residues. Basic and acidic residues-rich tracts occupy residues 450–479 (KDFD…KSSI) and 487–530 (LTKE…DPNR). Positions 632–801 (KRPPVVCVMG…ILTAEMGELK (170 aa)) constitute a tr-type G domain. The interval 641–648 (GHVDHGKT) is G1. 641–648 (GHVDHGKT) serves as a coordination point for GTP. The tract at residues 666 to 670 (GITQH) is G2. The G3 stretch occupies residues 687 to 690 (DTPG). GTP-binding positions include 687–691 (DTPGH) and 741–744 (NKID). Residues 741–744 (NKID) form a G4 region. The segment at 777-779 (SAH) is G5.

It belongs to the TRAFAC class translation factor GTPase superfamily. Classic translation factor GTPase family. IF-2 subfamily.

The protein resides in the cytoplasm. In terms of biological role, one of the essential components for the initiation of protein synthesis. Protects formylmethionyl-tRNA from spontaneous hydrolysis and promotes its binding to the 30S ribosomal subunits. Also involved in the hydrolysis of GTP during the formation of the 70S ribosomal complex. This chain is Translation initiation factor IF-2, found in Lachnoclostridium phytofermentans (strain ATCC 700394 / DSM 18823 / ISDg) (Clostridium phytofermentans).